The sequence spans 392 residues: WD repeat-containing protein GTS1 (392 aa).

WD repeat units lie at residues 81–124 (GHSD…QVSR), 128–167 (GNDQ…QVAC), 171–211 (SHMD…NDDD), and 323–368 (GHID…TEIN).

Expressed in germinating seeds, rosettes leaves, flowers and siliques.

In terms of biological role, involved in the control of plant growth development. Acts as negative regulator of seed germination, cell division in meristematic regions, plant growth and overall biomass accumulation. May function by regulating ribosome activities and biogenesis in plant cells. The sequence is that of WD repeat-containing protein GTS1 from Arabidopsis thaliana (Mouse-ear cress).